The primary structure comprises 642 residues: Threonine--tRNA ligase (642 aa).

In terms of domain architecture, TGS spans 1–61 (MPVIRFCDGS…TEDSSISFIS (61 aa)). A catalytic region spans residues 243-534 (DHRKIGKLLN…LIEEFSGKLP (292 aa)). 3 residues coordinate Zn(2+): Cys334, His385, and His511.

The protein belongs to the class-II aminoacyl-tRNA synthetase family. In terms of assembly, homodimer. It depends on Zn(2+) as a cofactor.

The protein localises to the cytoplasm. The catalysed reaction is tRNA(Thr) + L-threonine + ATP = L-threonyl-tRNA(Thr) + AMP + diphosphate + H(+). In terms of biological role, catalyzes the attachment of threonine to tRNA(Thr) in a two-step reaction: L-threonine is first activated by ATP to form Thr-AMP and then transferred to the acceptor end of tRNA(Thr). Also edits incorrectly charged L-seryl-tRNA(Thr). The chain is Threonine--tRNA ligase from Buchnera aphidicola subsp. Schizaphis graminum (strain Sg).